The primary structure comprises 356 residues: Phosphate acyltransferase (356 aa).

Belongs to the PlsX family. In terms of assembly, homodimer. Probably interacts with PlsY.

The protein localises to the cytoplasm. The catalysed reaction is a fatty acyl-[ACP] + phosphate = an acyl phosphate + holo-[ACP]. Its pathway is lipid metabolism; phospholipid metabolism. Functionally, catalyzes the reversible formation of acyl-phosphate (acyl-PO(4)) from acyl-[acyl-carrier-protein] (acyl-ACP). This enzyme utilizes acyl-ACP as fatty acyl donor, but not acyl-CoA. The polypeptide is Phosphate acyltransferase (Xanthobacter autotrophicus (strain ATCC BAA-1158 / Py2)).